A 361-amino-acid chain; its full sequence is Queuine tRNA-ribosyltransferase (361 aa).

The active-site Proton acceptor is D92. Substrate-binding positions include 92–96, D146, Q189, and G216; that span reads DSGGF. An RNA binding region spans residues 247–253; sequence GVGKPAD. Residue D266 is the Nucleophile of the active site. Residues 271-275 are RNA binding; important for wobble base 34 recognition; sequence TRSGR. Zn(2+)-binding residues include C304, C306, C309, and H335.

Belongs to the queuine tRNA-ribosyltransferase family. As to quaternary structure, homodimer. Within each dimer, one monomer is responsible for RNA recognition and catalysis, while the other monomer binds to the replacement base PreQ1. It depends on Zn(2+) as a cofactor.

It carries out the reaction 7-aminomethyl-7-carbaguanine + guanosine(34) in tRNA = 7-aminomethyl-7-carbaguanosine(34) in tRNA + guanine. The protein operates within tRNA modification; tRNA-queuosine biosynthesis. Catalyzes the base-exchange of a guanine (G) residue with the queuine precursor 7-aminomethyl-7-deazaguanine (PreQ1) at position 34 (anticodon wobble position) in tRNAs with GU(N) anticodons (tRNA-Asp, -Asn, -His and -Tyr). Catalysis occurs through a double-displacement mechanism. The nucleophile active site attacks the C1' of nucleotide 34 to detach the guanine base from the RNA, forming a covalent enzyme-RNA intermediate. The proton acceptor active site deprotonates the incoming PreQ1, allowing a nucleophilic attack on the C1' of the ribose to form the product. After dissociation, two additional enzymatic reactions on the tRNA convert PreQ1 to queuine (Q), resulting in the hypermodified nucleoside queuosine (7-(((4,5-cis-dihydroxy-2-cyclopenten-1-yl)amino)methyl)-7-deazaguanosine). In Rickettsia bellii (strain OSU 85-389), this protein is Queuine tRNA-ribosyltransferase.